We begin with the raw amino-acid sequence, 310 residues long: Dermonecrotic toxin LiSicTox-alphaII2 (310 aa).

The signal sequence occupies residues 1–18 (MLLRIALILGCWSILSEG). Positions 19-26 (AENDIAER) are excised as a propeptide. His38 is a catalytic residue. Glu58 and Asp60 together coordinate Mg(2+). Catalysis depends on His74, which acts as the Nucleophile. Intrachain disulfides connect Cys78/Cys84 and Cys80/Cys224. The N-linked (GlcNAc...) asparagine glycan is linked to Asn99. Asp118 contributes to the Mg(2+) binding site.

Belongs to the arthropod phospholipase D family. Class II subfamily. Requires Mg(2+) as cofactor. In terms of tissue distribution, expressed by the venom gland.

The protein resides in the secreted. The enzyme catalyses an N-(acyl)-sphingosylphosphocholine = an N-(acyl)-sphingosyl-1,3-cyclic phosphate + choline. It carries out the reaction an N-(acyl)-sphingosylphosphoethanolamine = an N-(acyl)-sphingosyl-1,3-cyclic phosphate + ethanolamine. The catalysed reaction is a 1-acyl-sn-glycero-3-phosphocholine = a 1-acyl-sn-glycero-2,3-cyclic phosphate + choline. It catalyses the reaction a 1-acyl-sn-glycero-3-phosphoethanolamine = a 1-acyl-sn-glycero-2,3-cyclic phosphate + ethanolamine. Dermonecrotic toxins cleave the phosphodiester linkage between the phosphate and headgroup of certain phospholipids (sphingolipid and lysolipid substrates), forming an alcohol (often choline) and a cyclic phosphate. This toxin acts on sphingomyelin (SM). It may also act on ceramide phosphoethanolamine (CPE), lysophosphatidylcholine (LPC) and lysophosphatidylethanolamine (LPE), but not on lysophosphatidylserine (LPS), and lysophosphatidylglycerol (LPG). It acts by transphosphatidylation, releasing exclusively cyclic phosphate products as second products. Induces dermonecrosis, hemolysis, increased vascular permeability, edema, inflammatory response, and platelet aggregation. In Loxosceles intermedia (Brown spider), this protein is Dermonecrotic toxin LiSicTox-alphaII2.